A 448-amino-acid chain; its full sequence is Probable ribonuclease FAU-1 (448 aa).

Positions glutamate 426–alanine 448 are disordered. Positions glutamate 436–alanine 448 are enriched in polar residues.

This sequence belongs to the FAU-1 family.

Probable RNase involved in rRNA stability through maturation and/or degradation of precursor rRNAs. Binds to RNA in loop regions with AU-rich sequences. This Pyrobaculum islandicum (strain DSM 4184 / JCM 9189 / GEO3) protein is Probable ribonuclease FAU-1.